The following is a 761-amino-acid chain: DNA topoisomerase 1 (761 aa).

The region spanning 6-143 is the Toprim domain; it reads TALIICEKPS…KRMRFSSLTK (138 aa). The Mg(2+) site is built by Glu12 and Asp111. One can recognise a Topo IA-type catalytic domain in the interval 157–569; it reads DYGLVDAGES…EAEKRLRKIL (413 aa). Residues 196-201 form an interaction with DNA region; sequence SVGRVQ. The O-(5'-phospho-DNA)-tyrosine intermediate role is filled by Tyr315. 3 C4-type zinc fingers span residues 600–626, 680–706, and 721–747; these read CPKCGGDLILIRHKKGRFVGCSNYPEC, CPKCGAKLILKKGVYGAFYGCSNYPKC, and CPKCGGDLVVREGKFGKFVGCSNYPKC.

This sequence belongs to the type IA topoisomerase family. Monomer. It depends on Mg(2+) as a cofactor.

It carries out the reaction ATP-independent breakage of single-stranded DNA, followed by passage and rejoining.. In terms of biological role, releases the supercoiling and torsional tension of DNA, which is introduced during the DNA replication and transcription, by transiently cleaving and rejoining one strand of the DNA duplex. Introduces a single-strand break via transesterification at a target site in duplex DNA. The scissile phosphodiester is attacked by the catalytic tyrosine of the enzyme, resulting in the formation of a DNA-(5'-phosphotyrosyl)-enzyme intermediate and the expulsion of a 3'-OH DNA strand. The free DNA strand then undergoes passage around the unbroken strand, thus removing DNA supercoils. Finally, in the religation step, the DNA 3'-OH attacks the covalent intermediate to expel the active-site tyrosine and restore the DNA phosphodiester backbone. This chain is DNA topoisomerase 1, found in Methanocaldococcus jannaschii (strain ATCC 43067 / DSM 2661 / JAL-1 / JCM 10045 / NBRC 100440) (Methanococcus jannaschii).